The following is a 443-amino-acid chain: Glutamate-rich protein 1 (443 aa).

N6-acetyllysine is present on Lys12. The disordered stretch occupies residues 15–333 (QRLFPPVPSG…DASEEDDTIT (319 aa)). Residues 42 to 54 (VTSEKVSQKHAEP) show a composition bias toward basic and acidic residues. Polar residues predominate over residues 87–97 (SCGSPENASSG). 2 stretches are compositionally biased toward basic residues: residues 109–124 (PKRR…KKFK) and 159–176 (KNKK…RKKA). The segment covering 205 to 226 (ACEEDGVDTSEEDPTLAGEEDV) has biased composition (acidic residues). Phosphoserine is present on residues Ser238 and Ser254. Residues 250–266 (GADASEEDPTPAGEEDV) are compositionally biased toward acidic residues. At Thr277 the chain carries Phosphothreonine. Residues 281–296 (DLTRAGEEDGKDTREE) show a composition bias toward basic and acidic residues. Positions 297-332 (DGADASEEDPTWAGEEEGADSGEEDGADASEEDDTI) are enriched in acidic residues.

The polypeptide is Glutamate-rich protein 1 (ERICH1) (Homo sapiens (Human)).